The sequence spans 310 residues: Elongation factor Ts (310 aa).

An involved in Mg(2+) ion dislocation from EF-Tu region spans residues 80 to 83; the sequence is TDFV.

This sequence belongs to the EF-Ts family.

It is found in the cytoplasm. Its function is as follows. Associates with the EF-Tu.GDP complex and induces the exchange of GDP to GTP. It remains bound to the aminoacyl-tRNA.EF-Tu.GTP complex up to the GTP hydrolysis stage on the ribosome. This chain is Elongation factor Ts, found in Beijerinckia indica subsp. indica (strain ATCC 9039 / DSM 1715 / NCIMB 8712).